Reading from the N-terminus, the 449-residue chain is Nucleoprotein (449 aa).

The tract at residues 1–55 is disordered; that stretch reads MSFTPGKQSSSRASSGNRSGNGILKWADQSDQSRNVQTRGRRVQSKQTATSQQPS. Residues 9-22 are compositionally biased toward low complexity; sequence SSSRASSGNRSGNG. 2 stretches are compositionally biased toward polar residues: residues 29 to 38 and 45 to 55; these read QSDQSRNVQT and SKQTATSQQPS. The segment at 52–194 is RNA-binding; that stretch reads QQPSGGTVVP…GYYIEGSGRS (143 aa). Residues 61–190 enclose the CoV N NTD domain; the sequence is PYYSWFSGIT…VLPQGYYIEG (130 aa). Arg-106, Arg-122, and Arg-164 together coordinate RNA. 3 disordered regions span residues 158–231, 266–297, and 387–449; these read PADI…VTPD, ILNK…NFGG, and MMNI…TSEI. Phosphoserine; by host is present on Ser-167. Thr-174 carries the post-translational modification Phosphothreonine; by host. Position 191 is a phosphoserine; by host (Ser-191). 2 stretches are compositionally biased toward polar residues: residues 194–204 and 212–227; these read SAPNSRSTSRA and GSRS…STPG. Residues 259-384 form the CoV N CTD domain; sequence AKEVRQKILN…QNLNAYQHQE (126 aa). Over residues 266 to 276 the composition is skewed to basic residues; the sequence is ILNKPRQKRSP. The interval 266-385 is dimerization; the sequence is ILNKPRQKRS…NLNAYQHQED (120 aa). A Phosphoserine; by host modification is found at Ser-391. Polar residues predominate over residues 400-410; sequence QKNGQVENDNI. Over residues 423–440 the composition is skewed to basic and acidic residues; that stretch reads KSRELTAEDISLLKKMDE. A Phosphoserine; by host modification is found at Ser-424. Thr-428 carries the post-translational modification Phosphothreonine; by host.

The protein belongs to the betacoronavirus nucleocapsid protein family. In terms of assembly, homooligomer. Both monomeric and oligomeric forms interact with RNA. Interacts with protein M. Interacts with NSP3; this interaction serves to tether the genome to the newly translated replicase-transcriptase complex at a very early stage of infection. In terms of processing, ADP-ribosylated. The ADP-ribosylation is retained in the virion during infection. Post-translationally, phosphorylated on serine and threonine residues.

It localises to the virion. The protein localises to the host endoplasmic reticulum-Golgi intermediate compartment. It is found in the host Golgi apparatus. Packages the positive strand viral genome RNA into a helical ribonucleocapsid (RNP) and plays a fundamental role during virion assembly through its interactions with the viral genome and membrane protein M. Plays an important role in enhancing the efficiency of subgenomic viral RNA transcription as well as viral replication. This chain is Nucleoprotein, found in Sus scrofa (Pig).